The primary structure comprises 303 residues: Protoheme IX farnesyltransferase (303 aa).

Helical transmembrane passes span 25–45 (MGLVQGNLIPAFAGAWLAVVM), 54–74 (IPQILLMLLGSTLIMGGACAL), 104–124 (LLLLSFGMMLVGEICLFLLNI), 125–145 (PSGVLGLMGIVGYVSYYSIWS), 151–171 (WNTVIGSFPGAVPPLIGWVAI), 179–199 (AIALFLVVFCWQPIHFYALAI), 227–247 (FIWLIILLPVPLLLINLGVVF), 248–268 (VVLATLLNLGWIALGLTTFKK), and 280–300 (FIYSLNYLVIFFVLAVIVSLL).

The protein belongs to the UbiA prenyltransferase family. Protoheme IX farnesyltransferase subfamily. Interacts with CtaA.

It is found in the cell membrane. It catalyses the reaction heme b + (2E,6E)-farnesyl diphosphate + H2O = Fe(II)-heme o + diphosphate. Its pathway is porphyrin-containing compound metabolism; heme O biosynthesis; heme O from protoheme: step 1/1. In terms of biological role, converts heme B (protoheme IX) to heme O by substitution of the vinyl group on carbon 2 of heme B porphyrin ring with a hydroxyethyl farnesyl side group. The protein is Protoheme IX farnesyltransferase of Staphylococcus aureus (strain bovine RF122 / ET3-1).